Here is a 251-residue protein sequence, read N- to C-terminus: UPF0309 protein GK1441 (251 aa).

One can recognise an SIS domain in the interval 31 to 214 (VSEAIQNGGI…VLMAENGIEP (184 aa)).

It belongs to the UPF0309 family.

The polypeptide is UPF0309 protein GK1441 (Geobacillus kaustophilus (strain HTA426)).